The sequence spans 258 residues: MKIQTNAVNVLDRTSFYLQAGLLKKTPAWYNVVARIPPVTKFAREPKLHDPVSGKYKGELDIMTDRLNRNTETYKTRAGSSDRQTAAVHKPSKLRFIEDKLRSLFFQQHPWELSRPKVLVENMGNEQYDWSRMLQLGKPLDGESVVQRTLYLLKSGAHREMLAAYDQARFEFYRLRMQQELEEQIAYEEATMVGAVFKTTAVEHGLQQEQKVLDKWKEDVVAGLQLMSAKKNSTKQSWAEATEEKEEQDSAEPEELKL.

The segment covering 230–239 has biased composition (polar residues); sequence KKNSTKQSWA. The segment at 230 to 258 is disordered; the sequence is KKNSTKQSWAEATEEKEEQDSAEPEELKL. Acidic residues predominate over residues 241-258; sequence ATEEKEEQDSAEPEELKL.

This sequence belongs to the mitochondrion-specific ribosomal protein mS23 family. As to quaternary structure, component of the mitochondrial small ribosomal subunit.

The protein localises to the mitochondrion. This chain is Small ribosomal subunit protein mS23 (RSM25), found in Eremothecium gossypii (strain ATCC 10895 / CBS 109.51 / FGSC 9923 / NRRL Y-1056) (Yeast).